We begin with the raw amino-acid sequence, 801 residues long: Phosphatidylinositol 4-phosphate 5-kinase 1 (801 aa).

Positions 1–21 (MPGLHVVSFLVVLLLQLRSSG) are cleaved as a signal peptide. 8 MORN repeats span residues 41-63 (YVGSFDGLVPHGPGKYMWTDGAL), 64-86 (YDGEWDKSKMTGRGLIQWPSGAS), 87-109 (YEGDFRGGFIDGAGTFKGVDGSV), 110-132 (YKGSWRMNKKHGMGTMVYSNSDT), 133-155 (YEGFWNEGLPDEFGKYTWADGNV), 156-178 (YIGRWKSGKMNGSGVMQWINGDT), 182-201 (NWLNGLAHGKGYCKYASGAC), and 202-223 (YIGTWDRGLKDGHGTFYQPGSK). Residues 366–797 (GHRSYYLMLN…RFISFLEKVF (432 aa)) form the PIPK domain.

In terms of tissue distribution, expressed in young seedlings, shoot and seeds, and at lower level in roots, stem and leaf.

The enzyme catalyses a 1,2-diacyl-sn-glycero-3-phospho-(1D-myo-inositol 4-phosphate) + ATP = a 1,2-diacyl-sn-glycero-3-phospho-(1D-myo-inositol-4,5-bisphosphate) + ADP + H(+). Involved in flowering. May suppress floral initiation by modifying the expression of genes related to floral induction. This Oryza sativa subsp. japonica (Rice) protein is Phosphatidylinositol 4-phosphate 5-kinase 1 (PIPK1).